The following is a 486-amino-acid chain: Glutamyl-tRNA(Gln) amidotransferase subunit A (486 aa).

Residues Lys-76 and Ser-151 each act as charge relay system in the active site. Ser-175 functions as the Acyl-ester intermediate in the catalytic mechanism.

It belongs to the amidase family. GatA subfamily. As to quaternary structure, heterotrimer of A, B and C subunits.

It carries out the reaction L-glutamyl-tRNA(Gln) + L-glutamine + ATP + H2O = L-glutaminyl-tRNA(Gln) + L-glutamate + ADP + phosphate + H(+). Functionally, allows the formation of correctly charged Gln-tRNA(Gln) through the transamidation of misacylated Glu-tRNA(Gln) in organisms which lack glutaminyl-tRNA synthetase. The reaction takes place in the presence of glutamine and ATP through an activated gamma-phospho-Glu-tRNA(Gln). The chain is Glutamyl-tRNA(Gln) amidotransferase subunit A from Nitrosomonas europaea (strain ATCC 19718 / CIP 103999 / KCTC 2705 / NBRC 14298).